We begin with the raw amino-acid sequence, 490 residues long: MSQTLFIDGEWISAEKEQIRSIINPFNQEEIATVSEGGREDAIKAIAAARRAFDKGEWSSLSGLERGKIVLKIAELIRRDLEELAELESLDTGKTLEESKADMDDIANVFQYYAGLADKDGGEIISSPIPDSESKIIREPIGVCGQITPWNYPLLQASWKIAPALAAGNTIVMKPSEITPLTTIKVFKLMEEAGVPKGVANLVLGPGATVGDELAVNKDVDLISFTGGIETGKKIMRAASGNVKKIALELGGKNPNIVFKDADLEVAVDQALNAVFFHAGQVCSAGSRLLVEDAIHDQFLAELVKRAKRIKLGNGFHAETESGPLISAEHRAKVEKYVEIGIEEGAKLETGGKRPEDPELQNGFFYEPTIFSNCNSDMRIVQEEVFGPVLTVETFSSEEEVIELANDTIYGLAGAVWSKDIEKCERVAARLRMGTVWINDFHPYFAQAPWGGYKQSGFGRELGKIGLEEYTEVKHVYRNTKPAAVNWFNS.

Residues K174, E177, and G227–G232 contribute to the NAD(+) site. Catalysis depends on residues E249 and C283. Residue E384 participates in NAD(+) binding.

It belongs to the aldehyde dehydrogenase family. As to quaternary structure, homodimer.

The catalysed reaction is betaine aldehyde + NAD(+) + H2O = glycine betaine + NADH + 2 H(+). It functions in the pathway amine and polyamine biosynthesis; betaine biosynthesis via choline pathway; betaine from betaine aldehyde: step 1/1. Its activity is regulated as follows. Activity is stimulated by low concentrations of salts and by moderate concentrations of glycine betaine. Highly tolerant to high ionic conditions. In vitro, activity is highly stimulated in the presence of proline. Involved in the biosynthesis of the osmoprotectant glycine betaine from choline. Catalyzes the oxidation of betaine aldehyde to betaine. Shows specificity for betaine aldehyde as substrate. Can use both NAD(+) and NADP(+), but NAD(+) is strongly preferred. In Bacillus subtilis (strain 168), this protein is Betaine aldehyde dehydrogenase.